The primary structure comprises 325 residues: Eukaryotic translation initiation factor 3 subunit I (325 aa).

5 WD repeats span residues 1–39 (MKPI…VWYS), 43–81 (ERLG…LWDC), 87–127 (LALL…FFDL), 135–175 (NNEP…QYSA), and 180–217 (VLVN…LFDS). Position 219 is a phosphothreonine (Thr219). WD repeat units follow at residues 221 to 267 (EHQK…KFEA) and 275 to 316 (EEEF…YFDP). At Lys264 the chain carries N6-acetyllysine. Residue Lys282 forms a Glycyl lysine isopeptide (Lys-Gly) (interchain with G-Cter in ubiquitin) linkage. Tyr308 bears the Phosphotyrosine mark.

Component of the eukaryotic translation initiation factor 3 (eIF-3) complex, which is composed of 13 subunits: EIF3A, EIF3B, EIF3C, EIF3D, EIF3E, EIF3F, EIF3G, EIF3H, EIF3I, EIF3J, EIF3K, EIF3L and EIF3M. The eIF-3 complex appears to include 3 stable modules: module A is composed of EIF3A, EIF3B, EIF3G and EIF3I; module B is composed of EIF3F, EIF3H, and EIF3M; and module C is composed of EIF3C, EIF3D, EIF3E, EIF3K and EIF3L. EIF3C of module C binds EIF3B of module A and EIF3H of module B, thereby linking the three modules. EIF3J is a labile subunit that binds to the eIF-3 complex via EIF3B. The eIF-3 complex interacts with RPS6KB1 under conditions of nutrient depletion. Mitogenic stimulation leads to binding and activation of a complex composed of MTOR and RPTOR, leading to phosphorylation and release of RPS6KB1 and binding of EIF4B to eIF-3. Phosphorylated by TGF-beta type II receptor.

It localises to the cytoplasm. Component of the eukaryotic translation initiation factor 3 (eIF-3) complex, which is required for several steps in the initiation of protein synthesis. The eIF-3 complex associates with the 40S ribosome and facilitates the recruitment of eIF-1, eIF-1A, eIF-2:GTP:methionyl-tRNAi and eIF-5 to form the 43S pre-initiation complex (43S PIC). The eIF-3 complex stimulates mRNA recruitment to the 43S PIC and scanning of the mRNA for AUG recognition. The eIF-3 complex is also required for disassembly and recycling of post-termination ribosomal complexes and subsequently prevents premature joining of the 40S and 60S ribosomal subunits prior to initiation. The eIF-3 complex specifically targets and initiates translation of a subset of mRNAs involved in cell proliferation, including cell cycling, differentiation and apoptosis, and uses different modes of RNA stem-loop binding to exert either translational activation or repression. This is Eukaryotic translation initiation factor 3 subunit I from Homo sapiens (Human).